Consider the following 1208-residue polypeptide: MYIKTITIQGFKSYRDQVAVDPFSPGHNVVVGRNGSGKSNFFSAIRFVLSDQYTKLSREERQRLLHEGTSTSTTLSAYVEIVFDNSDGRFPTGRQELVLRRTIGLKKDEYSLDRKSASKSEVDQLLESAGFSKANPYYIVPQGRITHLTNMNDRERLRLLKDVAGTEVYEQKRAESTRIMEETDGKRDKILELLTTIEDRLRELEEEKEELKEYQEKDRERRCLEYALHQRELEDVTNALDEIEAERRQDIHDSNEKRKEFNDREDEIQRYEEALTAAKHSLSTTQASLRQYETERADLVRNKTELECVIADFETAGQVGEHRRAELAEELEVMQQKVDEATARLEDLVQEAEQRIGEEKAAREALEPTQSKLSVLFAKQGRAQQFATQAARDEYLRDEIKALEEHEKNQGRRVEILQNEVAGAKEQLAQLSAKSEQQAQGENDRRENLKKMNEEIAQLQTNIAGMHEQKKELWREEGKLTQIEVNAKSEMEAAERSLMGMMNKDTSNGLRAVRQIAKRLNLDGVFGPLYDLFEVSDKYKTAVEVTAGNSLFHVVVDNDETASKLLDVMNREKSGRVTFMPLNRLKSHSVNYPKANDAIPMIQKLQFDREYVMAFEQVFGRTIICEDLQTAAHYTRSHGLNAVTIEGDRVDRKGALTGGYHDVRRSRLDTVKAAKKWRTAYETDHARHIEVKAALQNLEQEVTRAMGQVQALEAKKRHISDGGEGLFKLLTLPARDLDQARDRVTRLESSLEEAEGASRDAKAKRASYEEELRTPMRQNLTDEELRELETLTQSVESQKKLLFDATQSRAKAVGERNRLEIELSENLRRKRQELRDKLDRLEGEAGNGELQSGEVELRRNELRNLVRDIEQLEEKVSESEGRVDELNSEISKISENLERVQTQQMENTRAIMRVQKNAERYLTKRQTLINRREECNNAIRDLGALPEEAFSKYTDQRSDKIIKRLHKVNDGLKKFAHVNKKAFEQYNNFTKQRDELMDRRDELDQSAVKIEELIETLDQRKDEAIERTFKQVSKYFEEVFETLVPLGKGELIMQKKTDGFIEEESEESLEQGREKSDIDSYTGVSIRVSFNSKHDEGQRIQQLSGGQKSLVALALVFAIQKCDPAPFYLFDEIDANLDAQYRTAVATMIHTLSTSAQFITTTFKSEMLAQADKFYGVFFDKQKVSTIKVIEKEEASDFVETAAQVGQL.

2 coiled-coil regions span residues Arg-187 to Ala-362 and Ile-400 to Gln-469. The SMC hinge domain maps to Asp-523–His-633. Coiled coils occupy residues His-688–Glu-771 and Asn-817–Gln-903. The interval Glu-748–Arg-773 is disordered. The span at Gly-756–Arg-773 shows a compositional bias: basic and acidic residues.

Belongs to the SMC family. SMC3 subfamily. Component of cohesin complexes.

It is found in the nucleus. In terms of biological role, central component of cohesin, a complex required for chromosome cohesion during the cell cycle. The cohesin complex may form a large proteinaceous ring within which sister chromatids can be trapped. At anaphase, the complex is cleaved and dissociates from chromatin, allowing sister chromatids to segregate. Cohesion is coupled to DNA replication and is involved in DNA repair. The cohesin complex also plays an important role in spindle pole assembly during mitosis and in chromosomes movement. Is unrelated to urease function in C.neoformans. This Cryptococcus neoformans var. grubii serotype A (strain H99 / ATCC 208821 / CBS 10515 / FGSC 9487) (Filobasidiella neoformans var. grubii) protein is Urease accessory protein 2.